The sequence spans 222 residues: PLASMODESMATA CALLOSE-BINDING PROTEIN 4 (222 aa).

Positions 1–19 are cleaved as a signal peptide; sequence MSVLLPLCLIISMFTYSNA. The cysteines at positions 22 and 83 are disulfide-linked. Positions 88–187 are enriched in low complexity; that stretch reads AASPSTTPPS…SVFPGTTLGP (100 aa). Residues 88-199 form a disordered region; sequence AASPSTTPPS…SGGLGDPNAG (112 aa). The GPI-anchor amidated asparagine moiety is linked to residue asparagine 197. Positions 198–222 are cleaved as a propeptide — removed in mature form; sequence AGEKLSVRTNTVVFLLTGVAAMLVI.

Contains two additional disulfide bonds.

It localises to the cell membrane. Its subcellular location is the cell junction. The protein resides in the plasmodesma. The sequence is that of PLASMODESMATA CALLOSE-BINDING PROTEIN 4 (PDCB4) from Arabidopsis thaliana (Mouse-ear cress).